The sequence spans 180 residues: Small ribosomal subunit protein bS16 (180 aa).

Belongs to the bacterial ribosomal protein bS16 family.

This is Small ribosomal subunit protein bS16 from Flavobacterium psychrophilum (strain ATCC 49511 / DSM 21280 / CIP 103535 / JIP02/86).